Here is a 210-residue protein sequence, read N- to C-terminus: Ovomucoid (210 aa).

The first 24 residues, 1–24 (MAMAGVFVLFSFVLCGFLPDAAFG), serve as a signal peptide directing secretion. Kazal-like domains lie at 25–88 (AEVD…ECKE), 89–153 (TVPM…GCRK), and 156–210 (AAVS…FGKC). 3 disulfides stabilise this stretch: C29–C68, C46–C65, and C54–C86. N34 carries N-linked (GlcNAc...) asparagine glycosylation. N77, N93, and N99 each carry an N-linked (GlcNAc...) asparagine glycan. Disulfide bonds link C94–C133, C111–C130, C119–C151, C162–C192, C170–C189, and C178–C210. Residue N199 is glycosylated (N-linked (GlcNAc...) asparagine; partial).

Its subcellular location is the secreted. In terms of biological role, serine protease inhibitor. Inhibits trypsin. The sequence is that of Ovomucoid from Gallus gallus (Chicken).